Here is a 258-residue protein sequence, read N- to C-terminus: Trans-aconitate 2-methyltransferase (258 aa).

The protein belongs to the methyltransferase superfamily. Tam family.

Its subcellular location is the cytoplasm. The enzyme catalyses trans-aconitate + S-adenosyl-L-methionine = (E)-3-(methoxycarbonyl)pent-2-enedioate + S-adenosyl-L-homocysteine. Functionally, catalyzes the S-adenosylmethionine monomethyl esterification of trans-aconitate. This is Trans-aconitate 2-methyltransferase from Deinococcus radiodurans (strain ATCC 13939 / DSM 20539 / JCM 16871 / CCUG 27074 / LMG 4051 / NBRC 15346 / NCIMB 9279 / VKM B-1422 / R1).